The sequence spans 416 residues: 4-hydroxy-3-methylbut-2-en-1-yl diphosphate synthase (flavodoxin) (416 aa).

The [4Fe-4S] cluster site is built by Cys-304, Cys-307, Cys-350, and Glu-357.

This sequence belongs to the IspG family. It depends on [4Fe-4S] cluster as a cofactor.

The enzyme catalyses (2E)-4-hydroxy-3-methylbut-2-enyl diphosphate + oxidized [flavodoxin] + H2O + 2 H(+) = 2-C-methyl-D-erythritol 2,4-cyclic diphosphate + reduced [flavodoxin]. It functions in the pathway isoprenoid biosynthesis; isopentenyl diphosphate biosynthesis via DXP pathway; isopentenyl diphosphate from 1-deoxy-D-xylulose 5-phosphate: step 5/6. Functionally, converts 2C-methyl-D-erythritol 2,4-cyclodiphosphate (ME-2,4cPP) into 1-hydroxy-2-methyl-2-(E)-butenyl 4-diphosphate. The protein is 4-hydroxy-3-methylbut-2-en-1-yl diphosphate synthase (flavodoxin) of Rhizobium etli (strain CIAT 652).